The chain runs to 372 residues: Transcription factor MYB80 (372 aa).

HTH myb-type domains lie at 9 to 65 (KDNV…RPDL) and 66 to 116 (KHGE…KKKL). 2 consecutive DNA-binding regions (H-T-H motif) follow at residues 37–61 (WRLI…TNYL) and 89–112 (WSVI…NTKL). The span at 298 to 311 (MWSHQSLYSGSSGT) shows a compositional bias: polar residues. The disordered stretch occupies residues 298–347 (MWSHQSLYSGSSGTEEARRELPEKGNDSVGSSGGDDDAADDGKDSGKGAA). A compositionally biased stretch (basic and acidic residues) spans 312–323 (EEARRELPEKGN).

It localises to the nucleus. In terms of biological role, essential for tapetum development in anthers and microsporogenesis. May regulate the timing of tapetal programmed cell death (PCD) which is critical for pollen development. This chain is Transcription factor MYB80, found in Oryza sativa subsp. japonica (Rice).